The following is a 70-amino-acid chain: Kappa-conotoxin-like Sx11.2 (70 aa).

An N-terminal signal peptide occupies residues 1-26; it reads MMFRVTSVGCLLLVIVFLNLVVPTSA. Intrachain disulfides connect Cys27/Cys41, Cys34/Cys46, Cys40/Cys50, and Cys45/Cys54. A 4-carboxyglutamate mark is found at Glu30, Glu35, and Glu44. 4-hydroxyproline is present on Pro53. Pro57 is subject to Proline amide. Residues 61–70 constitute a propeptide that is removed on maturation; the sequence is SKLQEFFRQR.

This sequence belongs to the conotoxin I2 superfamily. As to expression, expressed by the venom duct.

It localises to the secreted. Modulator of potassium channels, specifically up-modulates the calcium and voltage-gated BK channels, has no effect on single channel conductance, but increases the open probability of BK channels. The protein is Kappa-conotoxin-like Sx11.2 of Conus striolatus (Cone snail).